The primary structure comprises 208 residues: MARYTEAKCRICRREGAKLFLKGDRCYTDKCAHERRPYAPGQHGRIRKKMSDYAVQLREKQKTRKMYGILEEQFRDYFKRADMQKGVTGENLLSALERRLDNTIYRLGFATSRNQARQLVRHGLFTLNGRRVNIPSLQVKVGDVIEVRERNRQSPIILEAQQVIARRGTPAWLEVEGEKLKGKVIALPTREDVQFPINEQLIVELYSK.

Residues 98-161 (RRLDNTIYRL…RQSPIILEAQ (64 aa)) enclose the S4 RNA-binding domain.

It belongs to the universal ribosomal protein uS4 family. In terms of assembly, part of the 30S ribosomal subunit. Contacts protein S5. The interaction surface between S4 and S5 is involved in control of translational fidelity.

One of the primary rRNA binding proteins, it binds directly to 16S rRNA where it nucleates assembly of the body of the 30S subunit. In terms of biological role, with S5 and S12 plays an important role in translational accuracy. The protein is Small ribosomal subunit protein uS4 of Solidesulfovibrio magneticus (strain ATCC 700980 / DSM 13731 / RS-1) (Desulfovibrio magneticus).